A 398-amino-acid chain; its full sequence is Acetate kinase 1 (398 aa).

Mg(2+) is bound at residue Asn9. An ATP-binding site is contributed by Lys16. A substrate-binding site is contributed by Arg89. Asp146 acts as the Proton donor/acceptor in catalysis. Residues 206–210 (HLGNG), 281–283 (DCR), and 329–333 (GIGEN) each bind ATP. Glu384 contributes to the Mg(2+) binding site.

Belongs to the acetokinase family. In terms of assembly, homodimer. It depends on Mg(2+) as a cofactor. Mn(2+) is required as a cofactor.

It localises to the cytoplasm. The catalysed reaction is acetate + ATP = acetyl phosphate + ADP. It participates in metabolic intermediate biosynthesis; acetyl-CoA biosynthesis; acetyl-CoA from acetate: step 1/2. Catalyzes the formation of acetyl phosphate from acetate and ATP. Can also catalyze the reverse reaction. In Photobacterium profundum (strain SS9), this protein is Acetate kinase 1.